The sequence spans 391 residues: Homoserine O-acetyltransferase (391 aa).

The AB hydrolase-1 domain maps to Asn50–Asp360. Ser155 (nucleophile) is an active-site residue. Position 225 (Arg225) interacts with substrate. Catalysis depends on residues Asp321 and His354. Asp355 provides a ligand contact to substrate.

The protein belongs to the AB hydrolase superfamily. MetX family. Homodimer.

The protein localises to the cytoplasm. It catalyses the reaction L-homoserine + acetyl-CoA = O-acetyl-L-homoserine + CoA. The protein operates within amino-acid biosynthesis; L-methionine biosynthesis via de novo pathway; O-acetyl-L-homoserine from L-homoserine: step 1/1. Its function is as follows. Transfers an acetyl group from acetyl-CoA to L-homoserine, forming acetyl-L-homoserine. This Rhodospirillum rubrum (strain ATCC 11170 / ATH 1.1.1 / DSM 467 / LMG 4362 / NCIMB 8255 / S1) protein is Homoserine O-acetyltransferase.